The primary structure comprises 301 residues: Nodulation protein D 3 (301 aa).

Positions 6 to 63 (LDLNLLVVLDALLTARNLTAAASSINLSQPAMSAAVARLRNYFNDELFTMSGRERVLT) constitute an HTH lysR-type domain. The H-T-H motif DNA-binding region spans 23-43 (LTAAASSINLSQPAMSAAVAR).

The protein belongs to the LysR transcriptional regulatory family.

NodD regulates the expression of the nodABCFE genes which encode other nodulation proteins. NodD is also a negative regulator of its own expression. Binds flavonoids as inducers. The protein is Nodulation protein D 3 (nodD3) of Mesorhizobium japonicum (strain LMG 29417 / CECT 9101 / MAFF 303099) (Mesorhizobium loti (strain MAFF 303099)).